Consider the following 347-residue polypeptide: DNA-directed RNA polymerase subunit alpha (347 aa).

The alpha N-terminal domain (alpha-NTD) stretch occupies residues M1–D243. Positions V260–A347 are alpha C-terminal domain (alpha-CTD).

The protein belongs to the RNA polymerase alpha chain family. Homodimer. The RNAP catalytic core consists of 2 alpha, 1 beta, 1 beta' and 1 omega subunit. When a sigma factor is associated with the core the holoenzyme is formed, which can initiate transcription.

The catalysed reaction is RNA(n) + a ribonucleoside 5'-triphosphate = RNA(n+1) + diphosphate. In terms of biological role, DNA-dependent RNA polymerase catalyzes the transcription of DNA into RNA using the four ribonucleoside triphosphates as substrates. This is DNA-directed RNA polymerase subunit alpha from Desulfovibrio desulfuricans (strain ATCC 27774 / DSM 6949 / MB).